Consider the following 403-residue polypeptide: Shaggy-related protein kinase GSK4 (403 aa).

The Protein kinase domain maps to 71–355 (YMAERVVGTG…ALEACAHSFF (285 aa)). Residues 77–85 (VGTGSFGVV) and lysine 100 each bind ATP. Catalysis depends on aspartate 196, which acts as the Proton acceptor.

This sequence belongs to the protein kinase superfamily. CMGC Ser/Thr protein kinase family. GSK-3 subfamily. Interacts with LIC.

It carries out the reaction L-seryl-[protein] + ATP = O-phospho-L-seryl-[protein] + ADP + H(+). It catalyses the reaction L-threonyl-[protein] + ATP = O-phospho-L-threonyl-[protein] + ADP + H(+). Functionally, probable serine-threonine kinase that may regulate brassinosteroid signaling. The chain is Shaggy-related protein kinase GSK4 from Oryza sativa subsp. japonica (Rice).